The primary structure comprises 415 residues: Serine hydroxymethyltransferase (415 aa).

(6S)-5,6,7,8-tetrahydrofolate contacts are provided by residues L117 and 121–123 (GHL). K226 carries the N6-(pyridoxal phosphate)lysine modification. Residues E241 and 349 to 351 (SPF) each bind (6S)-5,6,7,8-tetrahydrofolate.

This sequence belongs to the SHMT family. As to quaternary structure, homodimer. Pyridoxal 5'-phosphate serves as cofactor.

It localises to the cytoplasm. It catalyses the reaction (6R)-5,10-methylene-5,6,7,8-tetrahydrofolate + glycine + H2O = (6S)-5,6,7,8-tetrahydrofolate + L-serine. The protein operates within one-carbon metabolism; tetrahydrofolate interconversion. Its pathway is amino-acid biosynthesis; glycine biosynthesis; glycine from L-serine: step 1/1. Catalyzes the reversible interconversion of serine and glycine with tetrahydrofolate (THF) serving as the one-carbon carrier. This reaction serves as the major source of one-carbon groups required for the biosynthesis of purines, thymidylate, methionine, and other important biomolecules. Also exhibits THF-independent aldolase activity toward beta-hydroxyamino acids, producing glycine and aldehydes, via a retro-aldol mechanism. This is Serine hydroxymethyltransferase from Geotalea daltonii (strain DSM 22248 / JCM 15807 / FRC-32) (Geobacter daltonii).